The sequence spans 357 residues: Non-structural protein NS2 (357 aa).

Disordered regions lie at residues 162-199 (QNER…AKEM) and 228-268 (LDEK…KTHI). Composition is skewed to acidic residues over residues 230 to 243 (EKDE…EDEE) and 250 to 260 (DDDEQGEDASD).

It belongs to the orbivirus non-structural protein NS2 family.

Its function is as follows. Single-stranded RNA-binding protein. The protein is Non-structural protein NS2 (Segment-8) of Antilocapra americana (Pronghorn).